A 239-amino-acid chain; its full sequence is Ribosomal RNA small subunit methyltransferase G (239 aa).

Residues Gly77, Phe82, 128–129, and Arg147 each bind S-adenosyl-L-methionine; that span reads AE. Positions 219-239 are disordered; sequence RKTPKKYPRKPGTPNKLPIEK.

This sequence belongs to the methyltransferase superfamily. RNA methyltransferase RsmG family.

It is found in the cytoplasm. In terms of biological role, specifically methylates the N7 position of guanine in position 535 of 16S rRNA. In Bacillus cytotoxicus (strain DSM 22905 / CIP 110041 / 391-98 / NVH 391-98), this protein is Ribosomal RNA small subunit methyltransferase G.